The following is a 93-amino-acid chain: MAGPNGDPHVLGGGTGDEGDEGGDTFEEEEYAAINSMLDQINSCLDHLEEKNDHLHICLKELLESNRQTRLEFQQQSKQLNTGADVQGSQPPA.

Disordered stretches follow at residues 1-26 (MAGPNGDPHVLGGGTGDEGDEGGDTF) and 74-93 (QQQSKQLNTGADVQGSQPPA). A compositionally biased stretch (acidic residues) spans 17-26 (DEGDEGGDTF). A coiled-coil region spans residues 59–80 (LKELLESNRQTRLEFQQQSKQL).

The protein belongs to the UPF0184 (EST00098) family.

The protein resides in the cell junction. Its subcellular location is the cytoplasm. It localises to the cytoskeleton. In terms of biological role, essential for intermediate filament organization in intestinal cells, interacts with intermediate filament and regulates intestinal lumen morphology. This is Bublin coiled-coil protein (BBLN) from Taeniopygia guttata (Zebra finch).